A 127-amino-acid chain; its full sequence is Large ribosomal subunit protein bL20 (127 aa).

The protein belongs to the bacterial ribosomal protein bL20 family.

In terms of biological role, binds directly to 23S ribosomal RNA and is necessary for the in vitro assembly process of the 50S ribosomal subunit. It is not involved in the protein synthesizing functions of that subunit. The chain is Large ribosomal subunit protein bL20 from Akkermansia muciniphila (strain ATCC BAA-835 / DSM 22959 / JCM 33894 / BCRC 81048 / CCUG 64013 / CIP 107961 / Muc).